A 359-amino-acid chain; its full sequence is MTSTVDVLAYIPSPPQGVWYVGPVALRAYALFIIVGIVVAIVWGDRRWVARGGEKGTVLDIAIWAVPFGLIGGRLYHVMTDWPTYFGEGGDPVDALKVWQGGLGIWGAVALGGVGAWIGCRRRGIPLPALGDAVAPAILLAQAIGRLGNYFNQELYGRETEVPWGLEIFERRNDVGQVSPQLIDGVSTGEVAFVVHPTFLYEALWNVLIVLLLVWVDRRFRIGHGRLFALYVAGYCAGRFWIELMRSDHASLIAGVRVNSFTSALVFVAALVYFFAATKGREDPAELRPADGGPVGGGGEPVDGEIAQKEPEKNVEDAGKDEGTSASEPVSDDKAASTASTGGEAGTKTIDSKKDDAND.

Helical transmembrane passes span 24-44, 58-78, 98-118, and 124-144; these read VALR…IVWG, VLDI…LYHV, VWQG…GAWI, and GIPL…AQAI. An a 1,2-diacyl-sn-glycero-3-phospho-(1'-sn-glycerol)-binding site is contributed by Arg146. 3 consecutive transmembrane segments (helical) span residues 193–213, 222–243, and 258–278; these read FVVH…VLLL, IGHG…FWIE, and VNSF…FAAT. The segment at 284–359 is disordered; sequence PAELRPADGG…IDSKKDDAND (76 aa). Residues 306–323 show a composition bias toward basic and acidic residues; the sequence is IAQKEPEKNVEDAGKDEG. Residues 336 to 349 show a composition bias toward low complexity; sequence ASTASTGGEAGTKT. Over residues 350 to 359 the composition is skewed to basic and acidic residues; sequence IDSKKDDAND.

Belongs to the Lgt family.

The protein localises to the cell membrane. It carries out the reaction L-cysteinyl-[prolipoprotein] + a 1,2-diacyl-sn-glycero-3-phospho-(1'-sn-glycerol) = an S-1,2-diacyl-sn-glyceryl-L-cysteinyl-[prolipoprotein] + sn-glycerol 1-phosphate + H(+). The protein operates within protein modification; lipoprotein biosynthesis (diacylglyceryl transfer). Catalyzes the transfer of the diacylglyceryl group from phosphatidylglycerol to the sulfhydryl group of the N-terminal cysteine of a prolipoprotein, the first step in the formation of mature lipoproteins. The polypeptide is Phosphatidylglycerol--prolipoprotein diacylglyceryl transferase (Rhodococcus jostii (strain RHA1)).